The chain runs to 475 residues: FAD-dependent monooxygenase penE (475 aa).

FAD is bound by residues glutamate 35, glycine 49, and arginine 108. The active site involves tyrosine 216. Residues aspartate 308 and alanine 321 each coordinate FAD. N-linked (GlcNAc...) asparagine glycosylation occurs at asparagine 437. The chain crosses the membrane as a helical span at residues 446 to 466; the sequence is WGSIWLSPVILCLFCMLFLWP.

It belongs to the paxM FAD-dependent monooxygenase family. FAD is required as a cofactor.

It is found in the membrane. It carries out the reaction [(1'E)-3'-hydroxy-3',7'-dimethylocta-1',6'-dien-1'-yl]-quinolinone B + NADPH + O2 + H(+) = [(1'E)-5'-(3',3'-dimethyloxiran-2'-yl)-3'-hydroxy-3'-methylpent-1'-en-1'-yl]-quinolinone B + NADP(+) + H2O. The protein operates within secondary metabolite biosynthesis. Its pathway is alkaloid biosynthesis. It functions in the pathway mycotoxin biosynthesis. Its function is as follows. FAD-dependent monooxygenase; part of the gene cluster that mediates the biosynthesis of penigequinolones, potent insecticidal alkaloids that contain a highly modified 10-carbon prenyl group. The first stage is catalyzed by the nonribosomal peptide synthetase penN that condenses anthranilic acid and O-methyl-L-tyrosine to produce 4'-methoxycyclopeptin. 4'-methoxycyclopeptin is then converted to 4'-methoxydehydrocyclopeptin by the ketoglutarate-dependent dioxygenase penM through dehydrogenation to form a double bond between C-alpha and C-beta of the O-methyltyrosine side chain. PenM also converts its first product methoxydehydrocyclopeptin to 4'-methoxycyclopenin. The following conversion of 4'methoxycyclopenin into 4'-methoxyviridicatin is catalyzed by the cyclopenase penL. 4'-methoxyviridicatin is the precursor of quinolone natural products, and is further converted to quinolinone B. The prenyltransferase penI then catalyzes the canonical Friedel-Crafts alkylation of quinolinone B with dimethylallyl cation to yield dimethylallyl quinolone, which is subjected to FAD-dependent dehydrogenation by the FAD-linked oxidoreductase penH to yield conjugated aryl diene. The delta(3') double bond then serves as the site of the second alkylation with DMAPP catalyzed by the prenyltransferase penG to yield a carbenium ion intermediate, which can be attacked by H(2)O to yield a styrenyl quinolone containing a C3'-hydroxyprenyl chain, or undergo cyclization to yield yaequinolones J1 and J2. The conversion of the styrenyl quinolone into the tetrahydrofuran-containing yaequinolone C is performed by the FAD-dependent monooxygenase penE and involves epoxidation of the terminal C7'-C8' olefin, followed by epoxide ring opening initiated by the C3' hydroxyl group. The predicted cysteine hydrolase penJ acts as an epoxide hydrolase that enhances the rate of the 5-exo-tet cyclization step, increasing the yield of yaequinolone C. PenF catalyzes the cationic rearrangement of the epoxide formed by penE (before ring opening to produce yaequinolone C) into yaequinolone D. Finally, the short-chain dehydrogenase/reductase (SDR)-like reductase penD, catalyzes both the dehydration of yaequinolone D and the reduction of the resulting oxonium to yield penigequinolone. The polypeptide is FAD-dependent monooxygenase penE (Penicillium thymicola).